The sequence spans 209 residues: Ribonuclease HII (209 aa).

The RNase H type-2 domain maps to 18–209; that stretch reads GLVAGVDEVG…FKPVKALLER (192 aa). 3 residues coordinate a divalent metal cation: D24, E25, and D116.

Belongs to the RNase HII family. It depends on Mn(2+) as a cofactor. Requires Mg(2+) as cofactor.

It is found in the cytoplasm. The catalysed reaction is Endonucleolytic cleavage to 5'-phosphomonoester.. In terms of biological role, endonuclease that specifically degrades the RNA of RNA-DNA hybrids. The protein is Ribonuclease HII of Shewanella sp. (strain MR-7).